A 131-amino-acid chain; its full sequence is Large-conductance mechanosensitive channel (131 aa).

The next 3 membrane-spanning stretches (helical) occupy residues 8–28, 30–50, and 67–87; these read FAIRGNVIDLAVGVIIGGAFG, IVSSLVNDIIMPLVGLILGGI, and GAFIQTVVDFLIIAFSIFLFV.

It belongs to the MscL family. In terms of assembly, homopentamer.

The protein localises to the cell membrane. Functionally, channel that opens in response to stretch forces in the membrane lipid bilayer. May participate in the regulation of osmotic pressure changes within the cell. This is Large-conductance mechanosensitive channel from Geobacillus kaustophilus (strain HTA426).